The primary structure comprises 178 residues: Cytidylate kinase (178 aa).

7–15 (GLPGTGTTT) is an ATP binding site.

It belongs to the cytidylate kinase family. Type 2 subfamily.

Its subcellular location is the cytoplasm. The enzyme catalyses CMP + ATP = CDP + ADP. The catalysed reaction is dCMP + ATP = dCDP + ADP. The polypeptide is Cytidylate kinase (Methanococcus maripaludis (strain C7 / ATCC BAA-1331)).